A 185-amino-acid chain; its full sequence is Probable NEDD8-conjugating enzyme Ubc12-like (185 aa).

A disordered region spans residues 8 to 29 (KEKQREESQSNNGRGASTVKKQ). The segment covering 16-28 (QSNNGRGASTVKK) has biased composition (polar residues). Positions 31–176 (AGELRLHKDI…VRRAMMGGQV (146 aa)) constitute a UBC core domain. The active-site Glycyl thioester intermediate is Cys114.

This sequence belongs to the ubiquitin-conjugating enzyme family. UBC12 subfamily.

It participates in protein modification; protein neddylation. In terms of biological role, accepts the ubiquitin-like protein NEDD8/RUB1 from the ECR1-AXR1 E1 complex and catalyzes its covalent attachment to other proteins. The sequence is that of Probable NEDD8-conjugating enzyme Ubc12-like (RCE2) from Arabidopsis thaliana (Mouse-ear cress).